The primary structure comprises 481 residues: ATP synthase subunit beta (481 aa).

167–174 (GGAGVGKT) provides a ligand contact to ATP.

It belongs to the ATPase alpha/beta chains family. In terms of assembly, F-type ATPases have 2 components, CF(1) - the catalytic core - and CF(0) - the membrane proton channel. CF(1) has five subunits: alpha(3), beta(3), gamma(1), delta(1), epsilon(1). CF(0) has three main subunits: a(1), b(2) and c(9-12). The alpha and beta chains form an alternating ring which encloses part of the gamma chain. CF(1) is attached to CF(0) by a central stalk formed by the gamma and epsilon chains, while a peripheral stalk is formed by the delta and b chains.

The protein localises to the cell membrane. The enzyme catalyses ATP + H2O + 4 H(+)(in) = ADP + phosphate + 5 H(+)(out). In terms of biological role, produces ATP from ADP in the presence of a proton gradient across the membrane. The catalytic sites are hosted primarily by the beta subunits. The polypeptide is ATP synthase subunit beta (Corynebacterium jeikeium (strain K411)).